The primary structure comprises 925 residues: Periplasmic nitrate reductase (925 aa).

Positions 1–30 form a signal peptide, tat-type signal; it reads MDRREFIKSSAAAAACSAAGIAVPSSLSAA. The region spanning 36–92 is the 4Fe-4S Mo/W bis-MGD-type domain; that stretch reads WRWDKSACRFCGTGCGIMVATKNGKIVAVKGDPLAPVNRGLNCIKGYFNAKIMYGED. Residues C43, C46, C50, and C78 each contribute to the [4Fe-4S] cluster site. Residues K80, Q148, N173, C177, 210-217, M418, Q422, N528, 553-554, K576, D603, and 815-824 each bind Mo-bis(molybdopterin guanine dinucleotide); these read WGANMAEM, SD, and TGRVLEHWHS. W891 lines the substrate pocket. Residues N899 and K916 each contribute to the Mo-bis(molybdopterin guanine dinucleotide) site.

The protein belongs to the prokaryotic molybdopterin-containing oxidoreductase family. NasA/NapA/NarB subfamily. As to quaternary structure, component of the periplasmic nitrate reductase NapAB complex composed of NapA and NapB. [4Fe-4S] cluster is required as a cofactor. The cofactor is Mo-bis(molybdopterin guanine dinucleotide). Predicted to be exported by the Tat system. The position of the signal peptide cleavage has not been experimentally proven.

The protein localises to the periplasm. The catalysed reaction is 2 Fe(II)-[cytochrome] + nitrate + 2 H(+) = 2 Fe(III)-[cytochrome] + nitrite + H2O. Catalytic subunit of the periplasmic nitrate reductase complex NapAB. Receives electrons from NapB and catalyzes the reduction of nitrate to nitrite. The protein is Periplasmic nitrate reductase of Campylobacter fetus subsp. fetus (strain 82-40).